A 65-amino-acid polypeptide reads, in one-letter code: uncharacterized protein (65 aa).

This is an uncharacterized protein from Treponema pallidum (strain Nichols).